Reading from the N-terminus, the 345-residue chain is Aspartate--ammonia ligase (345 aa).

This sequence belongs to the class-II aminoacyl-tRNA synthetase family. AsnA subfamily.

Its subcellular location is the cytoplasm. The enzyme catalyses L-aspartate + NH4(+) + ATP = L-asparagine + AMP + diphosphate + H(+). Its pathway is amino-acid biosynthesis; L-asparagine biosynthesis; L-asparagine from L-aspartate (ammonia route): step 1/1. The chain is Aspartate--ammonia ligase from Bacteroides thetaiotaomicron (strain ATCC 29148 / DSM 2079 / JCM 5827 / CCUG 10774 / NCTC 10582 / VPI-5482 / E50).